The sequence spans 368 residues: Agmatine deiminase (368 aa).

Cys-357 functions as the Amidino-cysteine intermediate in the catalytic mechanism.

The protein belongs to the agmatine deiminase family. As to quaternary structure, homodimer.

The enzyme catalyses agmatine + H2O = N-carbamoylputrescine + NH4(+). It participates in amine and polyamine biosynthesis; putrescine biosynthesis via agmatine pathway; N-carbamoylputrescine from agmatine: step 1/1. In terms of biological role, mediates the hydrolysis of agmatine into N-carbamoylputrescine in the arginine decarboxylase (ADC) pathway of putrescine biosynthesis, a basic polyamine. The polypeptide is Agmatine deiminase (Pseudomonas aeruginosa (strain LESB58)).